The chain runs to 491 residues: Cytochrome P450 2F2 (491 aa).

Cys436 serves as a coordination point for heme.

It belongs to the cytochrome P450 family. Requires heme as cofactor. Club cells in lung and liver.

The protein localises to the endoplasmic reticulum membrane. It localises to the microsome membrane. In terms of biological role, involved in the regio- and stereoselective transformation of naphthalene to trans-1R-hydroxy-2R-glutathionyl-1,2-dihydronaphthalene in the presence of glutathione and glutathione S-transferases. It specifically catalyzes the production of a very reactive and potentially toxic intermediate, the 2R,2S arene oxide, that is associated with necrosis of the unciliated bronchiolar epithelial cells or club cells in lung. The polypeptide is Cytochrome P450 2F2 (Cyp2f2) (Mus musculus (Mouse)).